The sequence spans 82 residues: Small ribosomal subunit protein bS16 (82 aa).

Belongs to the bacterial ribosomal protein bS16 family.

The chain is Small ribosomal subunit protein bS16 from Natranaerobius thermophilus (strain ATCC BAA-1301 / DSM 18059 / JW/NM-WN-LF).